The following is a 218-amino-acid chain: Small ribosomal subunit protein uS3c (218 aa).

Residues 47–118 (VQKQIKNSSN…KIQITLKNVL (72 aa)) form the KH type-2 domain.

The protein belongs to the universal ribosomal protein uS3 family. Part of the 30S ribosomal subunit.

The protein resides in the plastid. It localises to the chloroplast. In Angiopteris evecta (Mule's foot fern), this protein is Small ribosomal subunit protein uS3c (rps3).